Reading from the N-terminus, the 171-residue chain is MPLLDSFRVDHTIMPAPAVRVAKVMQTPKGDDITVFDLRFCVPNKSMMSEKGTHTLEHLFAGFIRNHLNSPTVEIIDVSPMGCRTGFYMSLIGTPSEQEVAVAWKKAMEDVLKVENQSDIPELNLYQCGTCAMHSLDEAKDIARDILKSQIGVMSNKELYLSEEKLKSLGN.

3 residues coordinate Fe cation: His54, His58, and Cys128.

Belongs to the LuxS family. In terms of assembly, homodimer. The cofactor is Fe cation.

It carries out the reaction S-(5-deoxy-D-ribos-5-yl)-L-homocysteine = (S)-4,5-dihydroxypentane-2,3-dione + L-homocysteine. Involved in the synthesis of autoinducer 2 (AI-2) which is secreted by bacteria and is used to communicate both the cell density and the metabolic potential of the environment. The regulation of gene expression in response to changes in cell density is called quorum sensing. Catalyzes the transformation of S-ribosylhomocysteine (RHC) to homocysteine (HC) and 4,5-dihydroxy-2,3-pentadione (DPD). The chain is S-ribosylhomocysteine lyase from Aliarcobacter butzleri (strain RM4018) (Arcobacter butzleri).